A 697-amino-acid polypeptide reads, in one-letter code: Choline transporter-like protein 2 (697 aa).

Over 1–30 (MDMEEKPKYGEPRKFDPSFKGPIQNRGCTD) the chain is Cytoplasmic. The chain crosses the membrane as a helical span at residues 31 to 51 (IVCCIIFIIAILGYLAVGILA). Residues 52 to 226 (WTHGDPRKVI…KIFEDYTKSW (175 aa)) are Extracellular-facing. 2 N-linked (GlcNAc...) asparagine glycosylation sites follow: N113 and N204. Residues 227-247 (YWILICLLIAVVLSLIFIVLL) traverse the membrane as a helical segment. Residues 248–249 (RF) lie on the Cytoplasmic side of the membrane. The helical transmembrane segment at 250–270 (LAGVMVWVMILMVVAVIAYGI) threads the bilayer. Residues 271-309 (AHCSIKYVSLKDTPGSNITLQQLGFQPDFAVYLHIRQTW) lie on the Extracellular side of the membrane. N287 is a glycosylation site (N-linked (GlcNAc...) asparagine). The helical transmembrane segment at 310–330 (LAFIIILAILELIIILLLIFL) threads the bilayer. The Cytoplasmic portion of the chain corresponds to 331–353 (RNRIRVAVELMKEASRAIGYVMS). Residues 354-374 (SLVFPIFTFFLLAIVIAFWGV) form a helical membrane-spanning segment. Residues 375–435 (NAVFLSTSSE…YGGETPYHKY (61 aa)) are Extracellular-facing. 2 N-linked (GlcNAc...) asparagine glycosylation sites follow: N391 and N406. A helical transmembrane segment spans residues 436-456 (LILLQFYNVFLFFWCANFVTA). Residues 457–498 (LGQMTLAGAFASYYWAFDKSKDMPAFPLCASLGRSLRYHTGS) lie on the Cytoplasmic side of the membrane. The helical transmembrane segment at 499-519 (LAFGSLLLAIVQVIRVLLEYI) threads the bilayer. The Extracellular portion of the chain corresponds to 520 to 593 (DHKLKGAENK…RVVVLDKVTD (74 aa)). Residues 594 to 614 (FILFLGKLLIVGLVGIFAFFF) form a helical membrane-spanning segment. The Cytoplasmic portion of the chain corresponds to 615-632 (FSGQTDAFKGTAPSLHYY). A helical membrane pass occupies residues 633-653 (WVPILTVLVCSYLIAHGFFSV). Residues 654–697 (YAMCVDTLFLCFLEDLERNDGSAERPYLMSENLLNVLKKKNQAN) are Extracellular-facing.

Belongs to the CTL (choline transporter-like) family.

The protein resides in the cell membrane. The protein localises to the mitochondrion outer membrane. The enzyme catalyses choline(out) + n H(+)(in) = choline(in) + n H(+)(out). It catalyses the reaction ethanolamine(out) + n H(+)(in) = ethanolamine(in) + n H(+)(out). Its function is as follows. Choline/H+ antiporter, mainly in mitochodria. Also acts as a low-affinity ethanolamine/H+ antiporter, regulating the supply of extracellular ethanolamine (Etn) for the CDP-Etn pathway, redistribute intracellular Etn and balance the CDP-Cho and CDP-Etn arms of the Kennedy pathway. The polypeptide is Choline transporter-like protein 2 (slc44a2) (Danio rerio (Zebrafish)).